The sequence spans 35 residues: Photosystem II reaction center protein T (35 aa).

Residues 3-23 (ALVYTFLLVGTLGIIFFAIFF) traverse the membrane as a helical segment.

Belongs to the PsbT family. As to quaternary structure, PSII is composed of 1 copy each of membrane proteins PsbA, PsbB, PsbC, PsbD, PsbE, PsbF, PsbH, PsbI, PsbJ, PsbK, PsbL, PsbM, PsbT, PsbY, PsbZ, Psb30/Ycf12, at least 3 peripheral proteins of the oxygen-evolving complex and a large number of cofactors. It forms dimeric complexes.

It is found in the plastid. The protein resides in the chloroplast thylakoid membrane. Functionally, found at the monomer-monomer interface of the photosystem II (PS II) dimer, plays a role in assembly and dimerization of PSII. PSII is a light-driven water plastoquinone oxidoreductase, using light energy to abstract electrons from H(2)O, generating a proton gradient subsequently used for ATP formation. This chain is Photosystem II reaction center protein T, found in Staurastrum punctulatum (Green alga).